The sequence spans 609 residues: Dihydroxy-acid dehydratase (609 aa).

Residue aspartate 81 coordinates Mg(2+). Residue cysteine 122 participates in [2Fe-2S] cluster binding. 2 residues coordinate Mg(2+): aspartate 123 and lysine 124. The residue at position 124 (lysine 124) is an N6-carboxylysine. Residue cysteine 195 coordinates [2Fe-2S] cluster. Glutamate 491 serves as a coordination point for Mg(2+). Residue serine 517 is the Proton acceptor of the active site.

The protein belongs to the IlvD/Edd family. Homodimer. It depends on [2Fe-2S] cluster as a cofactor. Requires Mg(2+) as cofactor.

It catalyses the reaction (2R)-2,3-dihydroxy-3-methylbutanoate = 3-methyl-2-oxobutanoate + H2O. The catalysed reaction is (2R,3R)-2,3-dihydroxy-3-methylpentanoate = (S)-3-methyl-2-oxopentanoate + H2O. The protein operates within amino-acid biosynthesis; L-isoleucine biosynthesis; L-isoleucine from 2-oxobutanoate: step 3/4. It participates in amino-acid biosynthesis; L-valine biosynthesis; L-valine from pyruvate: step 3/4. Functions in the biosynthesis of branched-chain amino acids. Catalyzes the dehydration of (2R,3R)-2,3-dihydroxy-3-methylpentanoate (2,3-dihydroxy-3-methylvalerate) into 2-oxo-3-methylpentanoate (2-oxo-3-methylvalerate) and of (2R)-2,3-dihydroxy-3-methylbutanoate (2,3-dihydroxyisovalerate) into 2-oxo-3-methylbutanoate (2-oxoisovalerate), the penultimate precursor to L-isoleucine and L-valine, respectively. The protein is Dihydroxy-acid dehydratase of Acinetobacter baumannii (strain AB0057).